The chain runs to 132 residues: Histone H2B.1 (132 aa).

A compositionally biased stretch (low complexity) spans 1–13 (MSSKASKAPASKA). A disordered region spans residues 1 to 40 (MSSKASKAPASKAPAEKKPAAKKTSSSVDASKKRTKTRKE). Position 7 is an N6-acetyllysine; alternate (Lys7). A Glycyl lysine isopeptide (Lys-Gly) (interchain with G-Cter in SUMO); alternate cross-link involves residue Lys7. A Phosphoserine modification is found at Ser11. N6-acetyllysine is present on Lys12. Lys17 carries the post-translational modification N6-acetyllysine; alternate. Lys17 participates in a covalent cross-link: Glycyl lysine isopeptide (Lys-Gly) (interchain with G-Cter in SUMO); alternate. Residue Lys18 forms a Glycyl lysine isopeptide (Lys-Gly) (interchain with G-Cter in SUMO) linkage. Lys125 is covalently cross-linked (Glycyl lysine isopeptide (Lys-Gly) (interchain with G-Cter in ubiquitin)).

Belongs to the histone H2B family. The nucleosome is a histone octamer containing two molecules each of H2A, H2B, H3 and H4 assembled in one H3-H4 heterotetramer and two H2A-H2B heterodimers. The octamer wraps approximately 147 bp of DNA. Monoubiquitinated by the UBC2-BRE1 complex to form H2BK123ub1. H2BK123ub1 gives a specific tag for epigenetic transcriptional activation and is also prerequisite for H3K4me and H3K79me formation. H2BK123ub1 also modulates the formation of double-strand breaks during meiosis and is a prerequisite for DNA-damage checkpoint activation. In terms of processing, phosphorylated by STE20 to form H2BS10ph during progression through meiotic prophase. May be correlated with chromosome condensation. Post-translationally, acetylated by GCN5 to form H2BK11ac and H2BK16ac. H2BK16ac can also be formed by ESA1. Acetylation of N-terminal lysines and particularly formation of H2BK11acK16ac has a positive effect on transcription. Sumoylation to form H2BK6su and probably also H2BK16su or H2BK17su, occurs preferentially near the telomeres and represses gene transcription.

It is found in the nucleus. The protein localises to the chromosome. Core component of nucleosome. Nucleosomes wrap and compact DNA into chromatin, limiting DNA accessibility to the cellular machineries which require DNA as a template. Histones thereby play a central role in transcription regulation, DNA repair, DNA replication and chromosomal stability. DNA accessibility is regulated via a complex set of post-translational modifications of histones, also called histone code, and nucleosome remodeling. This chain is Histone H2B.1 (HTB1), found in Eremothecium gossypii (strain ATCC 10895 / CBS 109.51 / FGSC 9923 / NRRL Y-1056) (Yeast).